Consider the following 342-residue polypeptide: Phenylalanine--tRNA ligase alpha subunit (342 aa).

Position 257 (Glu-257) interacts with Mg(2+).

This sequence belongs to the class-II aminoacyl-tRNA synthetase family. Phe-tRNA synthetase alpha subunit type 1 subfamily. In terms of assembly, tetramer of two alpha and two beta subunits. Mg(2+) serves as cofactor.

It localises to the cytoplasm. The catalysed reaction is tRNA(Phe) + L-phenylalanine + ATP = L-phenylalanyl-tRNA(Phe) + AMP + diphosphate + H(+). This chain is Phenylalanine--tRNA ligase alpha subunit (pheS), found in Chlamydia trachomatis serovar D (strain ATCC VR-885 / DSM 19411 / UW-3/Cx).